Reading from the N-terminus, the 388-residue chain is 3-amino-5-hydroxybenzoate synthase (388 aa).

At K188 the chain carries N6-(pyridoxal phosphate)lysine.

The protein belongs to the degT/dnrJ/eryC1 family. Homodimer. Can interact with RifL. The cofactor is pyridoxal 5'-phosphate.

It carries out the reaction 5-deoxy-5-amino-3-dehydroshikimate = 3-amino-5-hydroxybenzoate + H2O + H(+). The enzyme catalyses UDP-3-oxo-alpha-D-glucose + L-glutamine = UDP-alpha-D-kanosamine + 2-oxoglutaramate. Its pathway is antibiotic biosynthesis; rifamycin B biosynthesis. Its activity is regulated as follows. AHBA synthase activity is activated by 3-deoxy-D-arabinoheptulosonic acid 7-phosphate (DAHP), an intermediate in the shikimate pathway, and is irreversibly inhibited by gabaculine (5-amino-1,3-cyclohexadiene-1-carboxylate). Functionally, catalyzes the dehydration and aromatization of 5-amino-5-deoxy-3-dehydroshikimate (aminoDHS) to 3-amino-5-hydroxybenzoate (AHBA), a compound that then serves as the starter unit for the assembly of a polyketide during the biosynthesis of rifamycin B and other ansamycin antibiotics. Cannot utilize 5-deoxy-5-amino-3-dehydroquinate (aminoDHQ), 5-deoxy-5-aminoshikimate (aminoSA), quinate, 3-dehydroquinate, or 3-dehydroshikimate (DHS) as substrate. In a complex with RifL, RifK may have a second function in the AHBA pathway, acting as a transaminase introducing the nitrogen into the first pathway intermediate, UDP-3-keto-D-glucose, to give UDP-kanosamine. Appears to use glutamine as the nitrogen donor; NH(4)(+) or asparagine are 30% less effective as nitrogen donors and neither glutamate nor aspartate show activity. This is 3-amino-5-hydroxybenzoate synthase (rifK) from Amycolatopsis mediterranei (strain S699) (Nocardia mediterranei).